The primary structure comprises 206 residues: Thiamine-phosphate synthase (206 aa).

Residues 38 to 42 and asparagine 70 each bind 4-amino-2-methyl-5-(diphosphooxymethyl)pyrimidine; that span reads QLRAK. Residues aspartate 71 and aspartate 90 each coordinate Mg(2+). Serine 107 contributes to the 4-amino-2-methyl-5-(diphosphooxymethyl)pyrimidine binding site. 133-135 contributes to the 2-[(2R,5Z)-2-carboxy-4-methylthiazol-5(2H)-ylidene]ethyl phosphate binding site; it reads TTT. Lysine 136 lines the 4-amino-2-methyl-5-(diphosphooxymethyl)pyrimidine pocket. 2-[(2R,5Z)-2-carboxy-4-methylthiazol-5(2H)-ylidene]ethyl phosphate contacts are provided by residues glycine 164 and 184-185; that span reads VS.

This sequence belongs to the thiamine-phosphate synthase family. Mg(2+) serves as cofactor.

It catalyses the reaction 2-[(2R,5Z)-2-carboxy-4-methylthiazol-5(2H)-ylidene]ethyl phosphate + 4-amino-2-methyl-5-(diphosphooxymethyl)pyrimidine + 2 H(+) = thiamine phosphate + CO2 + diphosphate. The enzyme catalyses 2-(2-carboxy-4-methylthiazol-5-yl)ethyl phosphate + 4-amino-2-methyl-5-(diphosphooxymethyl)pyrimidine + 2 H(+) = thiamine phosphate + CO2 + diphosphate. It carries out the reaction 4-methyl-5-(2-phosphooxyethyl)-thiazole + 4-amino-2-methyl-5-(diphosphooxymethyl)pyrimidine + H(+) = thiamine phosphate + diphosphate. It functions in the pathway cofactor biosynthesis; thiamine diphosphate biosynthesis; thiamine phosphate from 4-amino-2-methyl-5-diphosphomethylpyrimidine and 4-methyl-5-(2-phosphoethyl)-thiazole: step 1/1. In terms of biological role, condenses 4-methyl-5-(beta-hydroxyethyl)thiazole monophosphate (THZ-P) and 2-methyl-4-amino-5-hydroxymethyl pyrimidine pyrophosphate (HMP-PP) to form thiamine monophosphate (TMP). The protein is Thiamine-phosphate synthase of Herpetosiphon aurantiacus (strain ATCC 23779 / DSM 785 / 114-95).